The sequence spans 438 residues: Putative formin-like protein 21a (438 aa).

The tract at residues 1–74 (MSPVEISGAD…RVLPRPPPPP (74 aa)) is disordered. Residues 22-61 (PLPPPPPPPPPPMRRRAPLPPPPPPPMRRRAPLPPPPPPA) show a composition bias toward pro residues. Positions 124–438 (FPCPSKKKSS…SYGYFDQPWI (315 aa)) constitute an FH2 domain.

Belongs to the formin-like family. Class-II subfamily.

The protein is Putative formin-like protein 21a (FH21A) of Arabidopsis thaliana (Mouse-ear cress).